A 311-amino-acid polypeptide reads, in one-letter code: Malate dehydrogenase (311 aa).

NAD(+) is bound by residues 7–13 (GAAGGIG) and Asp34. Residues Arg81 and Arg87 each coordinate substrate. NAD(+) is bound by residues Asn94 and 117–119 (ITN). Positions 119 and 153 each coordinate substrate. His177 functions as the Proton acceptor in the catalytic mechanism. An NAD(+)-binding site is contributed by Met227.

This sequence belongs to the LDH/MDH superfamily. MDH type 1 family. Homodimer.

It catalyses the reaction (S)-malate + NAD(+) = oxaloacetate + NADH + H(+). In terms of biological role, catalyzes the reversible oxidation of malate to oxaloacetate. This chain is Malate dehydrogenase, found in Vibrio parahaemolyticus serotype O3:K6 (strain RIMD 2210633).